Reading from the N-terminus, the 492-residue chain is Ketol-acid reductoisomerase (NADP(+)) (492 aa).

The KARI N-terminal Rossmann domain maps to 15 to 208 (AQLGKCRFMA…GGHRAGVLEF (194 aa)). NADP(+) contacts are provided by residues 45–48 (CGAQ), Arg-68, Arg-76, Ser-78, and 108–110 (DKQ). His-132 is an active-site residue. NADP(+) is bound at residue Gly-158. 2 KARI C-terminal knotted domains span residues 209–344 (SFVA…NAPQ) and 345–485 (FEGK…MTDM). Mg(2+) contacts are provided by Asp-217, Glu-221, Glu-389, and Glu-393. Ser-414 is a substrate binding site.

Belongs to the ketol-acid reductoisomerase family. It depends on Mg(2+) as a cofactor.

It carries out the reaction (2R)-2,3-dihydroxy-3-methylbutanoate + NADP(+) = (2S)-2-acetolactate + NADPH + H(+). The enzyme catalyses (2R,3R)-2,3-dihydroxy-3-methylpentanoate + NADP(+) = (S)-2-ethyl-2-hydroxy-3-oxobutanoate + NADPH + H(+). It functions in the pathway amino-acid biosynthesis; L-isoleucine biosynthesis; L-isoleucine from 2-oxobutanoate: step 2/4. The protein operates within amino-acid biosynthesis; L-valine biosynthesis; L-valine from pyruvate: step 2/4. Functionally, involved in the biosynthesis of branched-chain amino acids (BCAA). Catalyzes an alkyl-migration followed by a ketol-acid reduction of (S)-2-acetolactate (S2AL) to yield (R)-2,3-dihydroxy-isovalerate. In the isomerase reaction, S2AL is rearranged via a Mg-dependent methyl migration to produce 3-hydroxy-3-methyl-2-ketobutyrate (HMKB). In the reductase reaction, this 2-ketoacid undergoes a metal-dependent reduction by NADPH to yield (R)-2,3-dihydroxy-isovalerate. The polypeptide is Ketol-acid reductoisomerase (NADP(+)) (Yersinia pestis bv. Antiqua (strain Antiqua)).